Consider the following 412-residue polypeptide: Maintenance of mitochondrial morphology protein 1 (412 aa).

Residues 1-19 (MAQDVCPTRSEPSLSFLQG) lie on the Lumenal side of the membrane. A helical membrane pass occupies residues 20-40 (LILGQLSVVLLIAAFIKFFIF). Topologically, residues 41-412 (GEAPSAEETA…GSLPGIDMPT (372 aa)) are cytoplasmic. The region spanning 121 to 337 (QPESLDWFNV…EPRFQEIELP (217 aa)) is the SMP-LTD domain. Basic and acidic residues predominate over residues 372–384 (ARQELDTETDGLR). Residues 372 to 412 (ARQELDTETDGLRYRRRPVGDDTYSVSGSMPGSLPGIDMPT) form a disordered region.

The protein belongs to the MMM1 family. Homodimer. Component of the ER-mitochondria encounter structure (ERMES) or MDM complex, composed of MMM1, MDM10, MDM12 and MDM34. An MMM1 homodimer associates with one molecule of MDM12 on each side in a pairwise head-to-tail manner, and the SMP-LTD domains of MMM1 and MDM12 generate a continuous hydrophobic tunnel for phospholipid trafficking.

The protein localises to the endoplasmic reticulum membrane. In terms of biological role, component of the ERMES/MDM complex, which serves as a molecular tether to connect the endoplasmic reticulum (ER) and mitochondria. Components of this complex are involved in the control of mitochondrial shape and protein biogenesis, and function in nonvesicular lipid trafficking between the ER and mitochondria. The MDM12-MMM1 subcomplex functions in the major beta-barrel assembly pathway that is responsible for biogenesis of all outer membrane beta-barrel proteins, and acts in a late step after the SAM complex. The MDM10-MDM12-MMM1 subcomplex further acts in the TOM40-specific pathway after the action of the MDM12-MMM1 complex. Essential for establishing and maintaining the structure of mitochondria and maintenance of mtDNA nucleoids. This chain is Maintenance of mitochondrial morphology protein 1, found in Podospora anserina (strain S / ATCC MYA-4624 / DSM 980 / FGSC 10383) (Pleurage anserina).